A 207-amino-acid chain; its full sequence is Guanylate kinase (207 aa).

The region spanning 5–184 is the Guanylate kinase-like domain; that stretch reads GNLFIVSAPS…ALADLRAIIR (180 aa). 12–19 is a binding site for ATP; that stretch reads APSGAGKS.

This sequence belongs to the guanylate kinase family.

It is found in the cytoplasm. The enzyme catalyses GMP + ATP = GDP + ADP. Functionally, essential for recycling GMP and indirectly, cGMP. This Shewanella sp. (strain MR-7) protein is Guanylate kinase.